Consider the following 364-residue polypeptide: Phosphoserine aminotransferase (364 aa).

Arg-46 serves as a coordination point for L-glutamate. Pyridoxal 5'-phosphate is bound by residues 80–81, Trp-106, Thr-157, Asp-176, and Gln-199; that span reads AR. Residue Lys-200 is modified to N6-(pyridoxal phosphate)lysine. Residue 241 to 242 coordinates pyridoxal 5'-phosphate; that stretch reads NT.

Belongs to the class-V pyridoxal-phosphate-dependent aminotransferase family. SerC subfamily. As to quaternary structure, homodimer. Pyridoxal 5'-phosphate is required as a cofactor.

It localises to the cytoplasm. The catalysed reaction is O-phospho-L-serine + 2-oxoglutarate = 3-phosphooxypyruvate + L-glutamate. The enzyme catalyses 4-(phosphooxy)-L-threonine + 2-oxoglutarate = (R)-3-hydroxy-2-oxo-4-phosphooxybutanoate + L-glutamate. It functions in the pathway amino-acid biosynthesis; L-serine biosynthesis; L-serine from 3-phospho-D-glycerate: step 2/3. It participates in cofactor biosynthesis; pyridoxine 5'-phosphate biosynthesis; pyridoxine 5'-phosphate from D-erythrose 4-phosphate: step 3/5. Its function is as follows. Catalyzes the reversible conversion of 3-phosphohydroxypyruvate to phosphoserine and of 3-hydroxy-2-oxo-4-phosphonooxybutanoate to phosphohydroxythreonine. In Vibrio vulnificus (strain YJ016), this protein is Phosphoserine aminotransferase.